We begin with the raw amino-acid sequence, 334 residues long: UDP-glucose 4-epimerase (334 aa).

NAD(+) contacts are provided by residues 11–12, 31–36, 50–51, 72–76, Asn91, Thr116, Tyr140, Lys144, and Phe168; these read YI, DNLQKG, DI, and FAANS. 2 residues coordinate substrate: Thr116 and Tyr140. The active-site Proton acceptor is the Tyr140. Substrate is bound by residues Asn169, 188–189, 205–207, Arg220, and 281–284; these read HL, AIF, and RSGD.

The protein belongs to the NAD(P)-dependent epimerase/dehydratase family. Homodimer. NAD(+) is required as a cofactor.

It carries out the reaction UDP-alpha-D-glucose = UDP-alpha-D-galactose. The protein operates within carbohydrate metabolism; galactose metabolism. Involved in the metabolism of galactose. Catalyzes the conversion of UDP-galactose (UDP-Gal) to UDP-glucose (UDP-Glc) through a mechanism involving the transient reduction of NAD. In Halalkalibacterium halodurans (strain ATCC BAA-125 / DSM 18197 / FERM 7344 / JCM 9153 / C-125) (Bacillus halodurans), this protein is UDP-glucose 4-epimerase (galE).